A 112-amino-acid polypeptide reads, in one-letter code: UPF0342 protein SSU05_1260 (112 aa).

Belongs to the UPF0342 family.

The sequence is that of UPF0342 protein SSU05_1260 from Streptococcus suis (strain 05ZYH33).